Reading from the N-terminus, the 87-residue chain is Small ribosomal subunit protein bS20 (87 aa).

A disordered region spans residues 1–26 (MANIKSAKKRAVQSEKRRKHNASRRS).

This sequence belongs to the bacterial ribosomal protein bS20 family.

Functionally, binds directly to 16S ribosomal RNA. This chain is Small ribosomal subunit protein bS20, found in Yersinia enterocolitica serotype O:8 / biotype 1B (strain NCTC 13174 / 8081).